The chain runs to 176 residues: MTNIRKTHPLLKIVNHSFIDLPAPSNISAWWNFGSLLGLCLLIQILTGLFLAMHYTSDTMTAFSSVTHICRDVNYGWLIRYMHANGASLFFICLFLHVGRGLYYGSYTYFETWNIGVILLFAVMATAFMGYVLPWGQMSFWGATVITNHLSAIPYIGTTLVEWIWGGFSVDKATLT.

3 helical membrane-spanning segments follow: residues 33–53, 77–98, and 113–133; these read FGSLLGLCLLIQILTGLFLAM, WLIRYMHANGASLFFICLFLHV, and WNIGVILLFAVMATAFMGYVL. Heme b is bound by residues His-83 and His-97.

This sequence belongs to the cytochrome b family. As to quaternary structure, the cytochrome bc1 complex contains 11 subunits: 3 respiratory subunits (MT-CYB, CYC1 and UQCRFS1), 2 core proteins (UQCRC1 and UQCRC2) and 6 low-molecular weight proteins (UQCRH/QCR6, UQCRB/QCR7, UQCRQ/QCR8, UQCR10/QCR9, UQCR11/QCR10 and a cleavage product of UQCRFS1). This cytochrome bc1 complex then forms a dimer. It depends on heme b as a cofactor.

The protein resides in the mitochondrion inner membrane. Functionally, component of the ubiquinol-cytochrome c reductase complex (complex III or cytochrome b-c1 complex) that is part of the mitochondrial respiratory chain. The b-c1 complex mediates electron transfer from ubiquinol to cytochrome c. Contributes to the generation of a proton gradient across the mitochondrial membrane that is then used for ATP synthesis. The sequence is that of Cytochrome b (MT-CYB) from Sciurus carolinensis (Eastern gray squirrel).